The chain runs to 277 residues: Ribosomal RNA small subunit methyltransferase A (277 aa).

Residues Asn-27, Leu-29, Gly-54, Glu-75, Asp-95, and Asn-118 each contribute to the S-adenosyl-L-methionine site.

The protein belongs to the class I-like SAM-binding methyltransferase superfamily. rRNA adenine N(6)-methyltransferase family. RsmA subfamily.

It is found in the cytoplasm. It carries out the reaction adenosine(1518)/adenosine(1519) in 16S rRNA + 4 S-adenosyl-L-methionine = N(6)-dimethyladenosine(1518)/N(6)-dimethyladenosine(1519) in 16S rRNA + 4 S-adenosyl-L-homocysteine + 4 H(+). Functionally, specifically dimethylates two adjacent adenosines (A1518 and A1519) in the loop of a conserved hairpin near the 3'-end of 16S rRNA in the 30S particle. May play a critical role in biogenesis of 30S subunits. The polypeptide is Ribosomal RNA small subunit methyltransferase A (Chlamydia trachomatis serovar L2 (strain ATCC VR-902B / DSM 19102 / 434/Bu)).